A 177-amino-acid polypeptide reads, in one-letter code: Cytochrome c oxidase assembly protein CtaG (177 aa).

Residues 1 to 8 (MTQKAKNT) are Cytoplasmic-facing. The helical; Signal-anchor for type II membrane protein transmembrane segment at 9–29 (IYLLILIILSMLCLVYASVPL) threads the bilayer. Topologically, residues 30–177 (YSIFCKVTGY…TFFKYKENTK (148 aa)) are periplasmic.

This sequence belongs to the COX11/CtaG family.

It localises to the cell inner membrane. Exerts its effect at some terminal stage of cytochrome c oxidase synthesis, probably by being involved in the insertion of the copper B into subunit I. The polypeptide is Cytochrome c oxidase assembly protein CtaG (Ehrlichia ruminantium (strain Welgevonden)).